The chain runs to 227 residues: Cytochrome c oxidase subunit 2 (227 aa).

Residues 1 to 14 lie on the Mitochondrial intermembrane side of the membrane; the sequence is MAYPLQLGLQDATS. Residues 15–45 form a helical membrane-spanning segment; it reads PIMEELTSFHDHTLMIVFLISSLVLYIISSM. Residues 46-59 are Mitochondrial matrix-facing; that stretch reads LTTKMTHTNTMDAQ. A helical membrane pass occupies residues 60 to 87; sequence GVETIWTILPAAILVLIALPSLRILYMM. Residues 88-227 lie on the Mitochondrial intermembrane side of the membrane; sequence DEINNPALTV…HFENWSASMI (140 aa). Cu cation contacts are provided by His161, Cys196, Glu198, Cys200, His204, and Met207. Glu198 provides a ligand contact to Mg(2+).

This sequence belongs to the cytochrome c oxidase subunit 2 family. As to quaternary structure, component of the cytochrome c oxidase (complex IV, CIV), a multisubunit enzyme composed of 14 subunits. The complex is composed of a catalytic core of 3 subunits MT-CO1, MT-CO2 and MT-CO3, encoded in the mitochondrial DNA, and 11 supernumerary subunits COX4I, COX5A, COX5B, COX6A, COX6B, COX6C, COX7A, COX7B, COX7C, COX8 and NDUFA4, which are encoded in the nuclear genome. The complex exists as a monomer or a dimer and forms supercomplexes (SCs) in the inner mitochondrial membrane with NADH-ubiquinone oxidoreductase (complex I, CI) and ubiquinol-cytochrome c oxidoreductase (cytochrome b-c1 complex, complex III, CIII), resulting in different assemblies (supercomplex SCI(1)III(2)IV(1) and megacomplex MCI(2)III(2)IV(2)). Found in a complex with TMEM177, COA6, COX18, COX20, SCO1 and SCO2. Interacts with TMEM177 in a COX20-dependent manner. Interacts with COX20. Interacts with COX16. Requires Cu cation as cofactor.

It localises to the mitochondrion inner membrane. It catalyses the reaction 4 Fe(II)-[cytochrome c] + O2 + 8 H(+)(in) = 4 Fe(III)-[cytochrome c] + 2 H2O + 4 H(+)(out). Component of the cytochrome c oxidase, the last enzyme in the mitochondrial electron transport chain which drives oxidative phosphorylation. The respiratory chain contains 3 multisubunit complexes succinate dehydrogenase (complex II, CII), ubiquinol-cytochrome c oxidoreductase (cytochrome b-c1 complex, complex III, CIII) and cytochrome c oxidase (complex IV, CIV), that cooperate to transfer electrons derived from NADH and succinate to molecular oxygen, creating an electrochemical gradient over the inner membrane that drives transmembrane transport and the ATP synthase. Cytochrome c oxidase is the component of the respiratory chain that catalyzes the reduction of oxygen to water. Electrons originating from reduced cytochrome c in the intermembrane space (IMS) are transferred via the dinuclear copper A center (CU(A)) of subunit 2 and heme A of subunit 1 to the active site in subunit 1, a binuclear center (BNC) formed by heme A3 and copper B (CU(B)). The BNC reduces molecular oxygen to 2 water molecules using 4 electrons from cytochrome c in the IMS and 4 protons from the mitochondrial matrix. This is Cytochrome c oxidase subunit 2 (MT-CO2) from Acomys ignitus (Fiery spiny mouse).